We begin with the raw amino-acid sequence, 113 residues long: Large ribosomal subunit protein bL19 (113 aa).

The protein belongs to the bacterial ribosomal protein bL19 family.

This protein is located at the 30S-50S ribosomal subunit interface and may play a role in the structure and function of the aminoacyl-tRNA binding site. The polypeptide is Large ribosomal subunit protein bL19 (Corynebacterium kroppenstedtii (strain DSM 44385 / JCM 11950 / CIP 105744 / CCUG 35717)).